We begin with the raw amino-acid sequence, 216 residues long: ATP-dependent Clp protease proteolytic subunit 1 (216 aa).

The Nucleophile role is filled by serine 119. Histidine 144 is an active-site residue.

It belongs to the peptidase S14 family. As to quaternary structure, fourteen ClpP subunits assemble into 2 heptameric rings which stack back to back to give a disk-like structure with a central cavity, resembling the structure of eukaryotic proteasomes.

Its subcellular location is the cytoplasm. The enzyme catalyses Hydrolysis of proteins to small peptides in the presence of ATP and magnesium. alpha-casein is the usual test substrate. In the absence of ATP, only oligopeptides shorter than five residues are hydrolyzed (such as succinyl-Leu-Tyr-|-NHMec, and Leu-Tyr-Leu-|-Tyr-Trp, in which cleavage of the -Tyr-|-Leu- and -Tyr-|-Trp bonds also occurs).. Functionally, cleaves peptides in various proteins in a process that requires ATP hydrolysis. Has a chymotrypsin-like activity. Plays a major role in the degradation of misfolded proteins. The sequence is that of ATP-dependent Clp protease proteolytic subunit 1 from Cutibacterium acnes (strain DSM 16379 / KPA171202) (Propionibacterium acnes).